The following is a 449-amino-acid chain: Exodeoxyribonuclease 7 large subunit (449 aa).

It belongs to the XseA family. As to quaternary structure, heterooligomer composed of large and small subunits.

It localises to the cytoplasm. It catalyses the reaction Exonucleolytic cleavage in either 5'- to 3'- or 3'- to 5'-direction to yield nucleoside 5'-phosphates.. Bidirectionally degrades single-stranded DNA into large acid-insoluble oligonucleotides, which are then degraded further into small acid-soluble oligonucleotides. This chain is Exodeoxyribonuclease 7 large subunit, found in Salmonella heidelberg (strain SL476).